We begin with the raw amino-acid sequence, 208 residues long: Outer-membrane lipoprotein carrier protein (208 aa).

The signal sequence occupies residues 1-22 (MRKTLTALMLSLPLLTPHMAFA).

The protein belongs to the LolA family. In terms of assembly, monomer.

The protein localises to the periplasm. Functionally, participates in the translocation of lipoproteins from the inner membrane to the outer membrane. Only forms a complex with a lipoprotein if the residue after the N-terminal Cys is not an aspartate (The Asp acts as a targeting signal to indicate that the lipoprotein should stay in the inner membrane). This is Outer-membrane lipoprotein carrier protein from Shewanella woodyi (strain ATCC 51908 / MS32).